Consider the following 437-residue polypeptide: GTPase Der (437 aa).

2 consecutive EngA-type G domains span residues 3–168 and 178–353; these read PLIA…PVQE and TNLA…ENRS. Residues 9-16, 56-60, 120-123, 184-191, 231-235, and 296-299 each bind GTP; these read GRPNVGKS, DTGGY, NKVE, DTAGL, and NKWD. Residues 354–437 enclose the KH-like domain; it reads RKITTSALNR…VTVSLRFFKK (84 aa).

Belongs to the TRAFAC class TrmE-Era-EngA-EngB-Septin-like GTPase superfamily. EngA (Der) GTPase family. In terms of assembly, associates with the 50S ribosomal subunit.

Functionally, GTPase that plays an essential role in the late steps of ribosome biogenesis. This is GTPase Der from Chlorobium phaeobacteroides (strain DSM 266 / SMG 266 / 2430).